The chain runs to 235 residues: Derlin-3 (235 aa).

The Cytoplasmic segment spans residues 1–22 (MAWQGLAAEFLQVPAVTRAYTA). The chain crosses the membrane as a helical span at residues 23-43 (ACVLTTAAVQLELLSPFQLYF). Topologically, residues 44–58 (NPHLVFRKFQVWRLV) are lumenal. The chain crosses the membrane as a helical span at residues 59–79 (TNFLFFGPLGFSFFFNMLFVF). The Cytoplasmic portion of the chain corresponds to 80–98 (RYCRMLEEGSFRGRTADFV). Residues 99–119 (FMFLFGGVLMTLLGLLGSLFF) traverse the membrane as a helical segment. Topologically, residues 120–157 (LGQALMAMLVYVWSRRSPRVRVNFFGLLTFQAPFLPWA) are lumenal. Residues 158-178 (LMGFSLLLGNSILVDLLGIAV) form a helical membrane-spanning segment. The Cytoplasmic segment spans residues 179-235 (GHIYYFLEDVFPNQPGGKRLLQTPGFLKLLLDAPAEDPNYLPLPEEQPGPHLPPPQQ). The tract at residues 216 to 235 (PNYLPLPEEQPGPHLPPPQQ) is disordered. The segment covering 223-235 (EEQPGPHLPPPQQ) has biased composition (pro residues).

This sequence belongs to the derlin family. As to quaternary structure, forms homo- and heterooligomers with DERL2 and, to a lesser extent, with DERL1. Interacts with VCP and EDEM1. Interacts with SELENOK and SELENOS. Interacts with the signal recognition particle/SRP and the SRP receptor; in the process of endoplasmic reticulum stress-induced pre-emptive quality control. In terms of tissue distribution, unlike DERL1 and DERL2, restricted to several tissues. Expressed at high levels in placenta, pancreas, spleen and small intestine.

It localises to the endoplasmic reticulum membrane. Functional component of endoplasmic reticulum-associated degradation (ERAD) for misfolded lumenal glycoproteins, but not that of misfolded nonglycoproteins. May act by forming a channel that allows the retrotranslocation of misfolded glycoproteins into the cytosol where they are ubiquitinated and degraded by the proteasome. May mediate the interaction between VCP and the misfolded glycoproteins. May be involved in endoplasmic reticulum stress-induced pre-emptive quality control, a mechanism that selectively attenuates the translocation of newly synthesized proteins into the endoplasmic reticulum and reroutes them to the cytosol for proteasomal degradation. The polypeptide is Derlin-3 (Homo sapiens (Human)).